A 306-amino-acid chain; its full sequence is Putative dihydroorotate dehydrogenase A (fumarate) (306 aa).

FMN-binding positions include S20 and 44-45 (KG). Substrate-binding positions include K44 and 68–72 (NSIGL). FMN is bound by residues N98 and N126. N126 is a substrate binding site. Residue C129 is the Nucleophile of the active site. Positions 164 and 190 each coordinate FMN. A substrate-binding site is contributed by 191 to 192 (NT). FMN contacts are provided by residues G216, 244–245 (GG), and 266–267 (GT).

Belongs to the dihydroorotate dehydrogenase family. Type 1 subfamily. Homodimer. FMN serves as cofactor.

It is found in the cytoplasm. The catalysed reaction is (S)-dihydroorotate + fumarate = orotate + succinate. The protein operates within pyrimidine metabolism; UMP biosynthesis via de novo pathway. In terms of biological role, catalyzes the conversion of dihydroorotate to orotate with fumarate as the electron acceptor. The sequence is that of Putative dihydroorotate dehydrogenase A (fumarate) (pyrD) from Aquifex aeolicus (strain VF5).